A 323-amino-acid polypeptide reads, in one-letter code: Pantothenate kinase (323 aa).

Residues 1 to 12 (MAEQNAASTTGV) show a composition bias toward polar residues. A disordered region spans residues 1-24 (MAEQNAASTTGVKPSPRTPDFSPY). 108-115 (GSVAVGKS) serves as a coordination point for ATP.

This sequence belongs to the prokaryotic pantothenate kinase family.

It localises to the cytoplasm. It carries out the reaction (R)-pantothenate + ATP = (R)-4'-phosphopantothenate + ADP + H(+). The protein operates within cofactor biosynthesis; coenzyme A biosynthesis; CoA from (R)-pantothenate: step 1/5. This is Pantothenate kinase from Corynebacterium glutamicum (strain R).